A 493-amino-acid chain; its full sequence is tRNA(Ile)-lysidine synthase, chloroplastic (493 aa).

Residue 68-73 (SGGQDS) coordinates ATP.

It belongs to the tRNA(Ile)-lysidine synthase family.

The protein resides in the plastid. It is found in the chloroplast. The enzyme catalyses cytidine(34) in tRNA(Ile2) + L-lysine + ATP = lysidine(34) in tRNA(Ile2) + AMP + diphosphate + H(+). Ligates lysine onto the cytidine present at position 34 of the AUA codon-specific tRNA(Ile) that contains the anticodon CAU, in an ATP-dependent manner. Cytidine is converted to lysidine, thus changing the amino acid specificity of the tRNA from methionine to isoleucine. In Staurastrum punctulatum (Green alga), this protein is tRNA(Ile)-lysidine synthase, chloroplastic.